The following is a 190-amino-acid chain: Peptidyl-tRNA hydrolase (190 aa).

Residue phenylalanine 14 participates in tRNA binding. Histidine 19 acts as the Proton acceptor in catalysis. Residues methionine 64, asparagine 66, and asparagine 112 each coordinate tRNA.

This sequence belongs to the PTH family. In terms of assembly, monomer.

The protein localises to the cytoplasm. It catalyses the reaction an N-acyl-L-alpha-aminoacyl-tRNA + H2O = an N-acyl-L-amino acid + a tRNA + H(+). In terms of biological role, hydrolyzes ribosome-free peptidyl-tRNAs (with 1 or more amino acids incorporated), which drop off the ribosome during protein synthesis, or as a result of ribosome stalling. Catalyzes the release of premature peptidyl moieties from peptidyl-tRNA molecules trapped in stalled 50S ribosomal subunits, and thus maintains levels of free tRNAs and 50S ribosomes. The chain is Peptidyl-tRNA hydrolase from Staphylococcus aureus (strain Mu3 / ATCC 700698).